The primary structure comprises 633 residues: Kinesin-like motor protein 9 (633 aa).

The region spanning 1 to 392 (MIQIFLRVKK…MRYSANAREI (392 aa)) is the Kinesin motor domain. ATP is bound at residue 94-101 (GVSGAGKT). Disordered regions lie at residues 393–423 (LPPP…TKAL), 531–556 (LEEE…SRKL), and 575–633 (KLWP…INEL). Residues 398 to 423 (NENSGSQSPSHSLLQKSKNTSSTKAL) show a composition bias toward polar residues. A coiled-coil region spans residues 417-541 (TSSTKALTSH…EEESIKESSA (125 aa)). The span at 578–587 (PQSTLIQAPN) shows a compositional bias: polar residues. A compositionally biased stretch (low complexity) spans 604–623 (VSPIKPLSPSRRPPLTSLYS). Residues Ser-605, Ser-611, and Ser-613 each carry the phosphoserine modification. The segment covering 624 to 633 (GTTDIDINEL) has biased composition (polar residues).

The protein belongs to the TRAFAC class myosin-kinesin ATPase superfamily. Kinesin family. Interacts with ase1. Post-translationally, phosphorylated by cdc2 and dephosphorylated by clp1. Dephosphorylation is required for the interaction with ase1.

It localises to the nucleus. Its subcellular location is the cytoplasm. The protein resides in the cytoskeleton. It is found in the microtubule organizing center. The protein localises to the spindle pole body. Its function is as follows. Kinesin-like motor protein involved in anaphase B spindle elongation. This Schizosaccharomyces pombe (strain 972 / ATCC 24843) (Fission yeast) protein is Kinesin-like motor protein 9 (klp9).